Reading from the N-terminus, the 255-residue chain is Pimeloyl-[acyl-carrier protein] methyl ester esterase (255 aa).

Substrate contacts are provided by residues W18, 78–79, and 139–143; these read SL and FLALD. The active-site Nucleophile is the S78. Active-site residues include D203 and H233. Substrate is bound at residue H233.

The protein belongs to the AB hydrolase superfamily. Carboxylesterase BioH family. In terms of assembly, monomer.

It is found in the cytoplasm. The enzyme catalyses 6-carboxyhexanoyl-[ACP] methyl ester + H2O = 6-carboxyhexanoyl-[ACP] + methanol + H(+). It functions in the pathway cofactor biosynthesis; biotin biosynthesis. In terms of biological role, the physiological role of BioH is to remove the methyl group introduced by BioC when the pimeloyl moiety is complete. It allows to synthesize pimeloyl-ACP via the fatty acid synthetic pathway through the hydrolysis of the ester bonds of pimeloyl-ACP esters. This chain is Pimeloyl-[acyl-carrier protein] methyl ester esterase, found in Xylella fastidiosa (strain M12).